Reading from the N-terminus, the 1291-residue chain is Cytoplasmic FMR1-interacting protein (1291 aa).

Residues 1269–1291 (HPSVISSSSHYQDPQKLRQSMNN) are disordered. The segment covering 1271-1291 (SVISSSSHYQDPQKLRQSMNN) has biased composition (polar residues).

It belongs to the CYFIP family. As to quaternary structure, interacts with Fmr1 and Rac1. Component of the WAVE complex composed of Hem/Kette, Scar/Wave and Cyfip where it binds through its C-terminus directly to Hem.

It localises to the cytoplasm. In terms of biological role, plays a role in guidance and morphology of central and peripheral axons and in synaptic morphology. Also required for formation of cell membrane protrusions and for bristle development. The sequence is that of Cytoplasmic FMR1-interacting protein from Drosophila pseudoobscura pseudoobscura (Fruit fly).